Here is a 1152-residue protein sequence, read N- to C-terminus: Nardilysin (1152 aa).

Residues 1 to 20 (MLRKVTVAAVCATRRKLCEA) form the signal peptide. Disordered regions lie at residues 81–108 (LGADESEEEGRRGSLSNAGDPEIVKSPS) and 133–208 (MEGK…KKTT). Residues S86, S94, and S96 each carry the phosphoserine modification. The segment covering 141–198 (TDDEEEEEVEEEEEDDDEDSGAEIEDDDEEGFDDEDEFDDEHDDDLDTEDNELEELEE) has biased composition (acidic residues). Residue H234 coordinates Zn(2+). Residue E237 is the Proton acceptor of the active site. Zn(2+) is bound by residues H238 and E315.

It belongs to the peptidase M16 family. Interacts with BACE1 and NRG1. Zn(2+) is required as a cofactor.

It is found in the mitochondrion. The protein resides in the cell projection. It localises to the dendrite. It carries out the reaction Hydrolysis of polypeptides, preferably at -Xaa-|-Arg-Lys-, and less commonly at -Arg-|-Arg-Xaa-, in which Xaa is not Arg or Lys.. Functionally, cleaves peptide substrates on the N-terminus of arginine residues in dibasic pairs. Is a critical activator of BACE1- and ADAM17-mediated pro-neuregulin ectodomain shedding, involved in the positive regulation of axonal maturation and myelination. Required for proper functioning of 2-oxoglutarate dehydrogenase (OGDH). The polypeptide is Nardilysin (Pongo abelii (Sumatran orangutan)).